The primary structure comprises 332 residues: 2,3-diketo-L-gulonate reductase (332 aa).

The Proton donor role is filled by H44. NAD(+) contacts are provided by residues 168 to 174 (ITMVDMS), 224 to 225 (WK), and 304 to 306 (GHE).

Belongs to the LDH2/MDH2 oxidoreductase family. DlgD subfamily. Homodimer.

Its subcellular location is the cytoplasm. The catalysed reaction is 3-dehydro-L-gulonate + NAD(+) = 2,3-dioxo-L-gulonate + NADH + H(+). It carries out the reaction 3-dehydro-L-gulonate + NADP(+) = 2,3-dioxo-L-gulonate + NADPH + H(+). In terms of biological role, catalyzes the reduction of 2,3-diketo-L-gulonate in the presence of NADH, to form 3-keto-L-gulonate. This chain is 2,3-diketo-L-gulonate reductase, found in Escherichia coli O8 (strain IAI1).